Reading from the N-terminus, the 337-residue chain is tRNA N6-adenosine threonylcarbamoyltransferase (337 aa).

Fe cation-binding residues include H111 and H115. Substrate is bound by residues 134-138, D167, G180, and N272; that span reads LVSGG. D300 provides a ligand contact to Fe cation.

It belongs to the KAE1 / TsaD family. The cofactor is Fe(2+).

The protein localises to the cytoplasm. The enzyme catalyses L-threonylcarbamoyladenylate + adenosine(37) in tRNA = N(6)-L-threonylcarbamoyladenosine(37) in tRNA + AMP + H(+). In terms of biological role, required for the formation of a threonylcarbamoyl group on adenosine at position 37 (t(6)A37) in tRNAs that read codons beginning with adenine. Is involved in the transfer of the threonylcarbamoyl moiety of threonylcarbamoyl-AMP (TC-AMP) to the N6 group of A37, together with TsaE and TsaB. TsaD likely plays a direct catalytic role in this reaction. The polypeptide is tRNA N6-adenosine threonylcarbamoyltransferase (Nitrosomonas europaea (strain ATCC 19718 / CIP 103999 / KCTC 2705 / NBRC 14298)).